The chain runs to 239 residues: DNA repair protein RecO (239 aa).

It belongs to the RecO family.

In terms of biological role, involved in DNA repair and RecF pathway recombination. In Stenotrophomonas maltophilia (strain R551-3), this protein is DNA repair protein RecO.